The primary structure comprises 163 residues: Ribonuclease H (163 aa).

The RNase H type-1 domain occupies serine 4–glutamine 146. Mg(2+) contacts are provided by aspartate 13, glutamate 51, aspartate 73, and aspartate 138.

The protein belongs to the RNase H family. Monomer. The cofactor is Mg(2+).

It localises to the cytoplasm. The enzyme catalyses Endonucleolytic cleavage to 5'-phosphomonoester.. In terms of biological role, endonuclease that specifically degrades the RNA of RNA-DNA hybrids. The polypeptide is Ribonuclease H (Rippkaea orientalis (strain PCC 8801 / RF-1) (Cyanothece sp. (strain PCC 8801))).